Here is a 266-residue protein sequence, read N- to C-terminus: HLA class II histocompatibility antigen, DR beta 3 chain (266 aa).

An N-terminal signal peptide occupies residues Met-1–Ala-29. The segment at Gly-30 to Val-124 is beta-1. Topologically, residues Gly-30 to Lys-227 are extracellular. 2 disulfides stabilise this stretch: Cys-44-Cys-108 and Cys-146-Cys-202. The N-linked (GlcNAc...) asparagine glycan is linked to Asn-48. Residues His-125–Lys-227 are beta-2. Residues Pro-126–Thr-214 enclose the Ig-like C1-type domain. A helical membrane pass occupies residues Met-228–Ile-248. At Tyr-249–Ser-266 the chain is on the cytoplasmic side.

The protein belongs to the MHC class II family. Heterotrimer that consists of an alpha chain HLA-DRA, a beta chain HLA-DRB1 and a peptide (peptide-MHCII). Newly synthesized alpha and beta chains forms a heterodimer (MHCII) that associates with the CD74/invariant chain (Ii) in the endoplasmic reticulum (ER). Ii is a trimer composed of three subunits and each subunit interacts with one MHCII dimer, blocking the peptide-binding cleft. As a result, MHCII molecules cannot bind peptides present in the ER. The complex of MHCII and CD74/Ii is transported in vesicles from ER to Golgi to lysosomes, where it encounters antigenic peptides generated via proteolysis of endocytosed antigens. MHCII dimers are dissociated from CD74/Ii by the combined action of proteolysis and HLA-DM. Lysosomal enzymes such as cathepsin, degrade CD74/Ii leaving a 24 amino acid remnant called class II-associated Ii or CLIP. Interacts (via the peptide binding cleft) with CLIP; this interaction inhibits antigen peptide binding before entry in the endosomal compartment. The displacement of CLIP and replacement by a high affinity peptide in lysosomes is performed by HLA-DM heterodimer. HLA-DM catalyzes CLIP dissociation from MHCII, stabilizes empty MHCII and mediates the selection of high affinity peptides. Interacts with HLA-DM heterodimer; this interaction is direct. Interacts with TCR (via CDR3). Interacts (via beta-2 domain) with CD4 coreceptor (via Ig-like V-type domain); this interaction is of exceptionally low affinity yet necessary for optimal recognition of antigenic peptides. In terms of processing, ubiquitinated by MARCHF1 and MARCHF8 at Lys-254 leading to sorting into the endosome system and down-regulation of MHC class II. As to expression, expressed in professional APCs: monocyte/macrophages, dendritic cells and B cells (at protein level).

It localises to the cell membrane. It is found in the endoplasmic reticulum membrane. The protein localises to the lysosome membrane. The protein resides in the late endosome membrane. Its subcellular location is the autolysosome membrane. Its function is as follows. A beta chain of antigen-presenting major histocompatibility complex class II (MHCII) molecule. In complex with the alpha chain HLA-DRA, displays antigenic peptides on professional antigen presenting cells (APCs) for recognition by alpha-beta T cell receptor (TCR) on HLA-DRB3-restricted CD4-positive T cells. This guides antigen-specific T-helper effector functions, both antibody-mediated immune response and macrophage activation, to ultimately eliminate the infectious agents and transformed cells. Typically presents extracellular peptide antigens of 10 to 30 amino acids that arise from proteolysis of endocytosed antigens in lysosomes. In the tumor microenvironment, presents antigenic peptides that are primarily generated in tumor-resident APCs likely via phagocytosis of apoptotic tumor cells or macropinocytosis of secreted tumor proteins. Presents peptides derived from intracellular proteins that are trapped in autolysosomes after macroautophagy, a mechanism especially relevant for T cell selection in the thymus and central immune tolerance. The selection of the immunodominant epitopes follows two processing modes: 'bind first, cut/trim later' for pathogen-derived antigenic peptides and 'cut first, bind later' for autoantigens/self-peptides. The anchor residue at position 1 of the peptide N-terminus, usually a large hydrophobic residue, is essential for high affinity interaction with MHCII molecules. ALLELE DRB3*01:01: Exclusively presents several immunogenic epitopes derived from C.tetani neurotoxin tetX, playing a significant role in immune recognition and long-term protection. Presents viral epitopes derived from HHV-6B U11, TRX2/U56 and U85 antigens to polyfunctional CD4-positive T cells with cytotoxic activity implicated in control of HHV-6B infection. Functionally, ALLELE DRB3*02:02 Exclusively presents several immunogenic epitopes derived from C.tetani neurotoxin tetX, playing a significant role in immune recognition and long-term protection. Upon EBV infection, presents to CD4-positive T cells latent antigen EBNA2 (PRSPTVFYNIPPMPLPPSQL) and lytic antigen BZLF1 (LTAYHVSTAPTGSWF) peptides, driving oligoclonal expansion and selection of virus-specific memory T cell subsets with cytotoxic potential to directly eliminate virus-infected B cells. Presents viral epitopes derived from HHV-6B U11, gB/U39 and gH/U48 antigens to polyfunctional CD4-positive T cells with cytotoxic activity implicated in control of HHV-6B infection. Plays a minor role in CD4-positive T cell immune response against Dengue virus by presenting conserved peptides from capsid and non-structural NS3 proteins. Displays peptides derived from IAV matrix protein M, implying a role in protection against IAV infection. In the context of tumor immunesurveillance, may present to T-helper 1 cells an immunogenic epitope derived from tumor-associated antigen WT1 (KRYFKLSHLQMHSRKH), likely providing for effective antitumor immunity in a wide range of solid and hematological malignancies. Presents to Vbeta2-positive T-helper 1 cells specifically an immunodominant peptide derived from tumor antigen CTAG1A/NY-ESO-1(PGVLLKEFTVSGNILTIRLTAADHR) and confers protective memory response. In metastatic epithelial tumors, presents to intratumoral CD4-positive T cells a TP53 neoantigen (HYNYMCNSSCMGSMNRRPILTIITL) carrying G245S hotspot driver mutation and may mediate tumor regression. In terms of biological role, ALLELE DRB3*03:01: Presents a series of conserved peptides derived from the M.tuberculosis PPE family of proteins, in particular PPE29 and PPE33, known to be highly immunogenic. Presents immunogenic epitopes derived from C.tetani neurotoxin tetX, playing a role in immune recognition and long-term protection. Displays immunodominant viral peptides from HCV non-structural protein NS2, as part of a broad range T-helper response to resolve infection. This is HLA class II histocompatibility antigen, DR beta 3 chain (HLA-DRB3) from Homo sapiens (Human).